We begin with the raw amino-acid sequence, 176 residues long: Ribosome rescue factor SmrB (176 aa).

In terms of domain architecture, Smr spans 93–168; that stretch reads LDLHGYRQSE…GDAALLVLID (76 aa).

This sequence belongs to the SmrB family. In terms of assembly, associates with collided ribosomes, but not with correctly translating polysomes.

Acts as a ribosome collision sensor. Detects stalled/collided disomes (pairs of ribosomes where the leading ribosome is stalled and a second ribosome has collided with it) and endonucleolytically cleaves mRNA at the 5' boundary of the stalled ribosome. Stalled/collided disomes form a new interface (primarily via the 30S subunits) that binds SmrB. Cleaved mRNA becomes available for tmRNA ligation, leading to ribosomal subunit dissociation and rescue of stalled ribosomes. In Shewanella oneidensis (strain ATCC 700550 / JCM 31522 / CIP 106686 / LMG 19005 / NCIMB 14063 / MR-1), this protein is Ribosome rescue factor SmrB.